Reading from the N-terminus, the 240-residue chain is Adenylate dimethylallyltransferase (240 aa).

It belongs to the isopentenyl transferase family.

The catalysed reaction is dimethylallyl diphosphate + AMP = N(6)-(dimethylallyl)adenosine 5'-phosphate + diphosphate. Transfers dimethylallyl groups to AMP as part of the biosynthesis of cytokinin phytohormones. This is Adenylate dimethylallyltransferase (izt) from Agrobacterium fabrum (strain C58 / ATCC 33970) (Agrobacterium tumefaciens (strain C58)).